We begin with the raw amino-acid sequence, 270 residues long: Cell division protein DivIB (270 aa).

The Cytoplasmic segment spans residues 1 to 28 (MAENKRVISIENRIPELKKYRKKKLVRH). Residues 29–49 (LAILIGIFVILIAITLYFLSP) form a helical membrane-spanning segment. Topologically, residues 50-270 (LSKLDKIAVS…AAKEKKETNE (221 aa)) are extracellular. A POTRA domain is found at 51–119 (SKLDKIAVSG…NDVQINITEF (69 aa)).

Belongs to the FtsQ/DivIB family. DivIB subfamily.

The protein resides in the cell membrane. Cell division protein that may be involved in stabilizing or promoting the assembly of the division complex. In Listeria monocytogenes serovar 1/2a (strain ATCC BAA-679 / EGD-e), this protein is Cell division protein DivIB.